The primary structure comprises 138 residues: Small ribosomal subunit protein uS11c (138 aa).

The interval Met1–Thr22 is disordered.

The protein belongs to the universal ribosomal protein uS11 family. As to quaternary structure, part of the 30S ribosomal subunit.

Its subcellular location is the plastid. The protein resides in the chloroplast. The polypeptide is Small ribosomal subunit protein uS11c (Phaseolus angularis (Azuki bean)).